The following is a 207-amino-acid chain: dTTP/UTP pyrophosphatase (207 aa).

The active-site Proton acceptor is D87.

It belongs to the Maf family. YhdE subfamily. It depends on a divalent metal cation as a cofactor.

The protein resides in the cytoplasm. The enzyme catalyses dTTP + H2O = dTMP + diphosphate + H(+). It carries out the reaction UTP + H2O = UMP + diphosphate + H(+). Nucleoside triphosphate pyrophosphatase that hydrolyzes dTTP and UTP. May have a dual role in cell division arrest and in preventing the incorporation of modified nucleotides into cellular nucleic acids. This Ralstonia nicotianae (strain ATCC BAA-1114 / GMI1000) (Ralstonia solanacearum) protein is dTTP/UTP pyrophosphatase.